The chain runs to 464 residues: Citrate synthase 5, mitochondrial (464 aa).

The transit peptide at 1–25 directs the protein to the mitochondrion; sequence MVFFRSVSAISRLRSRAVQQSSLSN. Catalysis depends on residues His300, His346, and Asp401.

It belongs to the citrate synthase family.

The protein localises to the mitochondrion matrix. It carries out the reaction oxaloacetate + acetyl-CoA + H2O = citrate + CoA + H(+). The protein operates within carbohydrate metabolism; tricarboxylic acid cycle; isocitrate from oxaloacetate: step 1/2. The polypeptide is Citrate synthase 5, mitochondrial (CSY5) (Arabidopsis thaliana (Mouse-ear cress)).